Consider the following 226-residue polypeptide: Urease accessory protein UreG (226 aa).

A disordered region spans residues 1 to 26 (MPPHFLDGQPHGHTDRPRRVRQPGEP). A GTP-binding site is contributed by 33 to 40 (GPVGSGKT).

The protein belongs to the SIMIBI class G3E GTPase family. UreG subfamily. As to quaternary structure, homodimer. UreD, UreF and UreG form a complex that acts as a GTP-hydrolysis-dependent molecular chaperone, activating the urease apoprotein by helping to assemble the nickel containing metallocenter of UreC. The UreE protein probably delivers the nickel.

It is found in the cytoplasm. In terms of biological role, facilitates the functional incorporation of the urease nickel metallocenter. This process requires GTP hydrolysis, probably effectuated by UreG. The protein is Urease accessory protein UreG of Mycolicibacterium vanbaalenii (strain DSM 7251 / JCM 13017 / BCRC 16820 / KCTC 9966 / NRRL B-24157 / PYR-1) (Mycobacterium vanbaalenii).